We begin with the raw amino-acid sequence, 413 residues long: Cardiolipin synthase B (413 aa).

2 consecutive PLD phosphodiesterase domains span residues 108-135 (VFRR…SAEH) and 285-312 (RRRP…DPLS). Catalysis depends on residues H113, K115, D120, H290, K292, and D297. The disordered stretch occupies residues 390–413 (VDPPAQPTMETQDRVETENTGVKP).

The protein belongs to the phospholipase D family. Cardiolipin synthase subfamily. ClsB sub-subfamily.

Its subcellular location is the cell membrane. It carries out the reaction 2 a 1,2-diacyl-sn-glycero-3-phospho-(1'-sn-glycerol) = a cardiolipin + glycerol. Catalyzes the phosphatidyl group transfer from one phosphatidylglycerol molecule to another to form cardiolipin (CL) (diphosphatidylglycerol) and glycerol. The polypeptide is Cardiolipin synthase B (Escherichia coli O157:H7).